Reading from the N-terminus, the 251-residue chain is Flagellar brake protein YcgR (251 aa).

The 113-residue stretch at 127 to 239 (QRRDGFRVRP…ASRTLQRYID (113 aa)) folds into the PilZ domain.

It belongs to the YcgR family. In terms of assembly, monomer. Interacts with the flagellar basal bodies.

It localises to the bacterial flagellum basal body. In terms of biological role, acts as a flagellar brake, regulating swimming and swarming in a bis-(3'-5') cyclic diguanylic acid (c-di-GMP)-dependent manner. Binds 1 c-di-GMP dimer per subunit. Increasing levels of c-di-GMP lead to decreased motility. The polypeptide is Flagellar brake protein YcgR (Leptothrix cholodnii (strain ATCC 51168 / LMG 8142 / SP-6) (Leptothrix discophora (strain SP-6))).